Here is a 468-residue protein sequence, read N- to C-terminus: Fibrinogen beta chain (468 aa).

A Pyrrolidone carboxylic acid modification is found at Q1. Residues 1-10 (QFPTDYDEGQ) show a composition bias toward acidic residues. A disordered region spans residues 1–54 (QFPTDYDEGQDDRPKVGLGARGHRPYDKKKEEAPSLRPVPPPISGGGYRARPAT). Residue T4 is glycosylated (O-linked (GalNAc...) threonine). At Y6 the chain carries Sulfotyrosine. Residues 24–34 (RPYDKKKEEAP) are compositionally biased toward basic and acidic residues. A coiled-coil region spans residues 88-204 (KLQDTLVRQE…TQMEYCRTPC (117 aa)). Cystine bridges form between C208-C293 and C218-C247. Residues 209-465 (NIPVVSGKEC…KMSMKIRPYF (257 aa)) enclose the Fibrinogen C-terminal domain. N371 carries N-linked (GlcNAc...) asparagine glycosylation. Residues C401 and C414 are joined by a disulfide bond.

In terms of assembly, heterohexamer; disulfide linked. Contains 2 sets of 3 non-identical chains (alpha, beta and gamma). The 2 heterotrimers are in head to head conformation with the N-termini in a small central domain. Conversion of fibrinogen to fibrin is triggered by thrombin, which cleaves fibrinopeptides A and B from alpha and beta chains, and thus exposes the N-terminal polymerization sites responsible for the formation of the soft clot. The soft clot is converted into the hard clot by factor XIIIA which catalyzes the epsilon-(gamma-glutamyl)lysine cross-linking between gamma chains (stronger) and between alpha chains (weaker) of different monomers. Detected in blood plasma (at protein level).

Its subcellular location is the secreted. Its function is as follows. Cleaved by the protease thrombin to yield monomers which, together with fibrinogen alpha (FGA) and fibrinogen gamma (FGG), polymerize to form an insoluble fibrin matrix. Fibrin has a major function in hemostasis as one of the primary components of blood clots. In addition, functions during the early stages of wound repair to stabilize the lesion and guide cell migration during re-epithelialization. Was originally thought to be essential for platelet aggregation, based on in vitro studies using anticoagulated blood. However subsequent studies have shown that it is not absolutely required for thrombus formation in vivo. Enhances expression of SELP in activated platelets. Maternal fibrinogen is essential for successful pregnancy. Fibrin deposition is also associated with infection, where it protects against IFNG-mediated hemorrhage. May also facilitate the antibacterial immune response via both innate and T-cell mediated pathways. The chain is Fibrinogen beta chain (FGB) from Bos taurus (Bovine).